The sequence spans 65 residues: Large ribosomal subunit protein uL29 (65 aa).

Belongs to the universal ribosomal protein uL29 family.

This is Large ribosomal subunit protein uL29 from Xylella fastidiosa (strain Temecula1 / ATCC 700964).